We begin with the raw amino-acid sequence, 540 residues long: Putative serine protease F56F10.1 (540 aa).

A signal peptide spans 1 to 16 (MLRNLLLLLLPLLIEA). N-linked (GlcNAc...) asparagine glycosylation is found at Asn-58 and Asn-87. Ser-182 functions as the Charge relay system in the catalytic mechanism. N-linked (GlcNAc...) asparagine glycosylation is found at Asn-270, Asn-300, Asn-317, Asn-343, Asn-441, and Asn-449. Asp-453 (charge relay system) is an active-site residue. N-linked (GlcNAc...) asparagine glycosylation is present at Asn-475. The active-site Charge relay system is His-479.

This sequence belongs to the peptidase S28 family.

The protein is Putative serine protease F56F10.1 of Caenorhabditis elegans.